The following is a 290-amino-acid chain: Bifunctional protein FolD (290 aa).

Residues 169-171, Ile194, and Ile235 each bind NADP(+); that span reads GAS.

It belongs to the tetrahydrofolate dehydrogenase/cyclohydrolase family. In terms of assembly, homodimer.

The enzyme catalyses (6R)-5,10-methylene-5,6,7,8-tetrahydrofolate + NADP(+) = (6R)-5,10-methenyltetrahydrofolate + NADPH. It catalyses the reaction (6R)-5,10-methenyltetrahydrofolate + H2O = (6R)-10-formyltetrahydrofolate + H(+). It participates in one-carbon metabolism; tetrahydrofolate interconversion. Functionally, catalyzes the oxidation of 5,10-methylenetetrahydrofolate to 5,10-methenyltetrahydrofolate and then the hydrolysis of 5,10-methenyltetrahydrofolate to 10-formyltetrahydrofolate. The polypeptide is Bifunctional protein FolD (Helicobacter pylori (strain HPAG1)).